Reading from the N-terminus, the 203-residue chain is Small ribosomal subunit protein uS4 (203 aa).

Positions 93–154 (RRLDNVVYRC…KSRNLDAVAD (62 aa)) constitute an S4 RNA-binding domain.

It belongs to the universal ribosomal protein uS4 family. As to quaternary structure, part of the 30S ribosomal subunit. Contacts protein S5. The interaction surface between S4 and S5 is involved in control of translational fidelity.

Functionally, one of the primary rRNA binding proteins, it binds directly to 16S rRNA where it nucleates assembly of the body of the 30S subunit. With S5 and S12 plays an important role in translational accuracy. The protein is Small ribosomal subunit protein uS4 of Chlorobaculum tepidum (strain ATCC 49652 / DSM 12025 / NBRC 103806 / TLS) (Chlorobium tepidum).